The following is a 454-amino-acid chain: 3-phosphoshikimate 1-carboxyvinyltransferase (454 aa).

Residues Lys39, Ser40, and Arg44 each coordinate 3-phosphoshikimate. Lys39 lines the phosphoenolpyruvate pocket. Gly112 and Arg140 together coordinate phosphoenolpyruvate. Residues Ser185, Gln187, Asp333, and Lys360 each coordinate 3-phosphoshikimate. A phosphoenolpyruvate-binding site is contributed by Gln187. The active-site Proton acceptor is the Asp333. Positions 364 and 405 each coordinate phosphoenolpyruvate.

Belongs to the EPSP synthase family. As to quaternary structure, monomer.

Its subcellular location is the cytoplasm. It catalyses the reaction 3-phosphoshikimate + phosphoenolpyruvate = 5-O-(1-carboxyvinyl)-3-phosphoshikimate + phosphate. Its pathway is metabolic intermediate biosynthesis; chorismate biosynthesis; chorismate from D-erythrose 4-phosphate and phosphoenolpyruvate: step 6/7. Functionally, catalyzes the transfer of the enolpyruvyl moiety of phosphoenolpyruvate (PEP) to the 5-hydroxyl of shikimate-3-phosphate (S3P) to produce enolpyruvyl shikimate-3-phosphate and inorganic phosphate. This is 3-phosphoshikimate 1-carboxyvinyltransferase from Xylella fastidiosa (strain Temecula1 / ATCC 700964).